The following is a 368-amino-acid chain: Protein trichome birefringence-like 43 (368 aa).

A helical; Signal-anchor for type II membrane protein membrane pass occupies residues 9–25 (GVVSVMVLMILVLLKQI). Positions 117–119 (GDS) match the GDS motif motif. The short motif at 344–358 (DCSHWCLSGVPDSWN) is the DCXHWCLPGXXDXWN motif element.

This sequence belongs to the PC-esterase family. TBL subfamily.

It localises to the membrane. In terms of biological role, may act as a bridging protein that binds pectin and other cell wall polysaccharides. Probably involved in maintaining esterification of pectins. May be involved in the specific O-acetylation of cell wall polymers. The polypeptide is Protein trichome birefringence-like 43 (TBL43) (Arabidopsis thaliana (Mouse-ear cress)).